We begin with the raw amino-acid sequence, 261 residues long: Cytochrome c oxidase subunit 3 (261 aa).

Over 1–15 the chain is Mitochondrial matrix; that stretch reads MTRQTHAYHMVNPSP. Residues 16–34 form a helical membrane-spanning segment; the sequence is WPLTGALSALLMTSGLIMW. The Mitochondrial intermembrane segment spans residues 35–40; it reads FHFNST. Residues 41-66 form a helical membrane-spanning segment; the sequence is ILLMLGLTTNMLTMYQWWRDVIREST. Topologically, residues 67–72 are mitochondrial matrix; the sequence is FQGHHT. The chain crosses the membrane as a helical span at residues 73 to 105; the sequence is PNVQKGLRYGMILFIISEVLFFTGFFWAFYHSS. Over 106–128 the chain is Mitochondrial intermembrane; the sequence is LAPTPELGGCWPPTGIHPLNPLE. The helical transmembrane segment at 129–152 threads the bilayer; sequence VPLLNTSVLLASGVSITWAHHSLM. Residues 153-155 are Mitochondrial matrix-facing; that stretch reads EGN. Residues 156 to 183 form a helical membrane-spanning segment; sequence RNHMLQALFITIALGVYFTLLQASEYYE. At 184–190 the chain is on the mitochondrial intermembrane side; the sequence is APFTISD. The chain crosses the membrane as a helical span at residues 191-223; it reads GVYGSTFFVATGFHGLHVIIGSTFLIVCFFRQL. Residues 224–232 lie on the Mitochondrial matrix side of the membrane; the sequence is KFHFTSNHH. The helical transmembrane segment at 233–256 threads the bilayer; that stretch reads FGFEAAAWYWHFVDVVWLFLYVSI. Residues 257 to 261 are Mitochondrial intermembrane-facing; sequence YWWGS.

This sequence belongs to the cytochrome c oxidase subunit 3 family. Component of the cytochrome c oxidase (complex IV, CIV), a multisubunit enzyme composed of 14 subunits. The complex is composed of a catalytic core of 3 subunits MT-CO1, MT-CO2 and MT-CO3, encoded in the mitochondrial DNA, and 11 supernumerary subunits COX4I, COX5A, COX5B, COX6A, COX6B, COX6C, COX7A, COX7B, COX7C, COX8 and NDUFA4, which are encoded in the nuclear genome. The complex exists as a monomer or a dimer and forms supercomplexes (SCs) in the inner mitochondrial membrane with NADH-ubiquinone oxidoreductase (complex I, CI) and ubiquinol-cytochrome c oxidoreductase (cytochrome b-c1 complex, complex III, CIII), resulting in different assemblies (supercomplex SCI(1)III(2)IV(1) and megacomplex MCI(2)III(2)IV(2)).

The protein resides in the mitochondrion inner membrane. It carries out the reaction 4 Fe(II)-[cytochrome c] + O2 + 8 H(+)(in) = 4 Fe(III)-[cytochrome c] + 2 H2O + 4 H(+)(out). Its function is as follows. Component of the cytochrome c oxidase, the last enzyme in the mitochondrial electron transport chain which drives oxidative phosphorylation. The respiratory chain contains 3 multisubunit complexes succinate dehydrogenase (complex II, CII), ubiquinol-cytochrome c oxidoreductase (cytochrome b-c1 complex, complex III, CIII) and cytochrome c oxidase (complex IV, CIV), that cooperate to transfer electrons derived from NADH and succinate to molecular oxygen, creating an electrochemical gradient over the inner membrane that drives transmembrane transport and the ATP synthase. Cytochrome c oxidase is the component of the respiratory chain that catalyzes the reduction of oxygen to water. Electrons originating from reduced cytochrome c in the intermembrane space (IMS) are transferred via the dinuclear copper A center (CU(A)) of subunit 2 and heme A of subunit 1 to the active site in subunit 1, a binuclear center (BNC) formed by heme A3 and copper B (CU(B)). The BNC reduces molecular oxygen to 2 water molecules using 4 electrons from cytochrome c in the IMS and 4 protons from the mitochondrial matrix. This is Cytochrome c oxidase subunit 3 (MT-CO3) from Eudorcas rufifrons (Red-fronted gazelle).